A 306-amino-acid chain; its full sequence is Protein FdhE homolog (306 aa).

The protein belongs to the FdhE family.

Its subcellular location is the cytoplasm. In terms of biological role, necessary for formate dehydrogenase activity. This is Protein FdhE homolog from Glaesserella parasuis serovar 5 (strain SH0165) (Haemophilus parasuis).